Reading from the N-terminus, the 194-residue chain is Holliday junction branch migration complex subunit RuvA (194 aa).

The interval methionine 1–alanine 64 is domain I. The tract at residues threonine 65–alanine 143 is domain II. The tract at residues alanine 144–alanine 147 is flexible linker. The interval alanine 147–lysine 194 is domain III.

This sequence belongs to the RuvA family. In terms of assembly, homotetramer. Forms an RuvA(8)-RuvB(12)-Holliday junction (HJ) complex. HJ DNA is sandwiched between 2 RuvA tetramers; dsDNA enters through RuvA and exits via RuvB. An RuvB hexamer assembles on each DNA strand where it exits the tetramer. Each RuvB hexamer is contacted by two RuvA subunits (via domain III) on 2 adjacent RuvB subunits; this complex drives branch migration. In the full resolvosome a probable DNA-RuvA(4)-RuvB(12)-RuvC(2) complex forms which resolves the HJ.

The protein resides in the cytoplasm. In terms of biological role, the RuvA-RuvB-RuvC complex processes Holliday junction (HJ) DNA during genetic recombination and DNA repair, while the RuvA-RuvB complex plays an important role in the rescue of blocked DNA replication forks via replication fork reversal (RFR). RuvA specifically binds to HJ cruciform DNA, conferring on it an open structure. The RuvB hexamer acts as an ATP-dependent pump, pulling dsDNA into and through the RuvAB complex. HJ branch migration allows RuvC to scan DNA until it finds its consensus sequence, where it cleaves and resolves the cruciform DNA. This is Holliday junction branch migration complex subunit RuvA from Neisseria meningitidis serogroup C (strain 053442).